The chain runs to 372 residues: 4-hydroxy-3-methylbut-2-en-1-yl diphosphate synthase (flavodoxin) (372 aa).

4 residues coordinate [4Fe-4S] cluster: C270, C273, C305, and E312.

Belongs to the IspG family. [4Fe-4S] cluster is required as a cofactor.

It carries out the reaction (2E)-4-hydroxy-3-methylbut-2-enyl diphosphate + oxidized [flavodoxin] + H2O + 2 H(+) = 2-C-methyl-D-erythritol 2,4-cyclic diphosphate + reduced [flavodoxin]. It functions in the pathway isoprenoid biosynthesis; isopentenyl diphosphate biosynthesis via DXP pathway; isopentenyl diphosphate from 1-deoxy-D-xylulose 5-phosphate: step 5/6. In terms of biological role, converts 2C-methyl-D-erythritol 2,4-cyclodiphosphate (ME-2,4cPP) into 1-hydroxy-2-methyl-2-(E)-butenyl 4-diphosphate. This chain is 4-hydroxy-3-methylbut-2-en-1-yl diphosphate synthase (flavodoxin), found in Salmonella gallinarum (strain 287/91 / NCTC 13346).